A 148-amino-acid polypeptide reads, in one-letter code: Hemoglobin subunit gamma (148 aa).

The region spanning 3 to 148 (HFTAEEKAII…VAIAMGHKYH (146 aa)) is the Globin domain. Heme b contacts are provided by His64 and His93.

The protein belongs to the globin family. In terms of assembly, heterotetramer of two alpha chains and two gamma chains in fetal hemoglobin (Hb F). In terms of tissue distribution, red blood cells.

Its function is as follows. Gamma chains make up the fetal hemoglobin F, in combination with alpha chains. This Carlito syrichta (Philippine tarsier) protein is Hemoglobin subunit gamma (HBG).